Consider the following 230-residue polypeptide: 8-demethylnovobiocic acid C(8)-methyltransferase (230 aa).

This sequence belongs to the methyltransferase superfamily.

The enzyme catalyses 8-desmethylnovobiocic acid + S-adenosyl-L-methionine = novobiocic acid + S-adenosyl-L-homocysteine + H(+). The protein operates within antibiotic biosynthesis; novobiocin biosynthesis. Its function is as follows. C-methyltransferase that methylates 8-demethylnovobiocic acid to produce novobiocic acid in the novobiocin biosynthesis pathway. Novobiocin is an aminocoumarin family antibiotic that targets bacterial DNA gyrases. The sequence is that of 8-demethylnovobiocic acid C(8)-methyltransferase (novO) from Streptomyces niveus (Streptomyces spheroides).